A 343-amino-acid chain; its full sequence is GTPase Obg (343 aa).

Residues 1–159 (MKFLDEAKVY…HWLWLRLKLI (159 aa)) enclose the Obg domain. The 168-residue stretch at 160–327 (ADAGLVGLPN…ALRALLAAMD (168 aa)) folds into the OBG-type G domain. GTP contacts are provided by residues 166–173 (GLPNAGKS), 191–195 (FTTLH), 212–215 (DIPG), 279–282 (SKAD), and 308–310 (SAA). Residues Ser-173 and Thr-193 each contribute to the Mg(2+) site.

This sequence belongs to the TRAFAC class OBG-HflX-like GTPase superfamily. OBG GTPase family. As to quaternary structure, monomer. Requires Mg(2+) as cofactor.

It localises to the cytoplasm. An essential GTPase which binds GTP, GDP and possibly (p)ppGpp with moderate affinity, with high nucleotide exchange rates and a fairly low GTP hydrolysis rate. Plays a role in control of the cell cycle, stress response, ribosome biogenesis and in those bacteria that undergo differentiation, in morphogenesis control. In Methylobacterium sp. (strain 4-46), this protein is GTPase Obg.